A 369-amino-acid chain; its full sequence is Oleoyl-acyl carrier protein thioesterase, chloroplastic (369 aa).

Residues N262, H264, and C299 contribute to the active site.

Belongs to the acyl-ACP thioesterase family.

The protein localises to the plastid. It is found in the chloroplast. The enzyme catalyses (9Z)-octadecenoyl-[ACP] + H2O = (9Z)-octadecenoate + holo-[ACP] + H(+). In terms of biological role, plays an essential role in chain termination during de novo fatty acid synthesis. High thioesterase activity for oleoyl-ACP versus other acyl-ACPs. The polypeptide is Oleoyl-acyl carrier protein thioesterase, chloroplastic (FATA) (Coriandrum sativum (Coriander)).